A 1017-amino-acid polypeptide reads, in one-letter code: Semaphorin-6D (1017 aa).

Positions 1–20 (MRVFLLCAYILLLMISQLRA) are cleaved as a signal peptide. Residues 21–606 (VSFPEDDEPL…GESNQMVHMN (586 aa)) are Extracellular-facing. The Sema domain maps to 27–512 (DEPLNTVDYH…FSSCVIRIPL (486 aa)). Asparagine 51 carries an N-linked (GlcNAc...) asparagine glycan. 4 cysteine pairs are disulfide-bonded: cysteine 108–cysteine 118, cysteine 136–cysteine 145, cysteine 259–cysteine 370, and cysteine 284–cysteine 329. The N-linked (GlcNAc...) asparagine glycan is linked to asparagine 283. Asparagine 435 and asparagine 461 each carry an N-linked (GlcNAc...) asparagine glycan. Intrachain disulfides connect cysteine 477–cysteine 506, cysteine 515–cysteine 533, cysteine 521–cysteine 568, and cysteine 525–cysteine 541. The 56-residue stretch at 514–569 (RCERYGSCKKSCIASRDPYCGWLSQGSCGRVTPGMLAEGYEQDAEFGNTAHLGDCH) folds into the PSI domain. Residues 607–627 (VLITCVFAAFVLGAFIAGVAV) traverse the membrane as a helical segment. Residues 628–1017 (YCYRDMFVRK…SVRPLNKYTY (390 aa)) are Cytoplasmic-facing. Phosphoserine occurs at positions 667, 678, and 688. Disordered regions lie at residues 688–719 (SRKELPPNGDTKSMVMDHRGQPPELAALPTPE), 731–769 (AMKSHSEKAHGHGASRKETPQFFPSSPPPHSPLSHGHIP), 783–818 (TSFSNSNAHKAEKKLQNIDHPLTKSSSKRDHRRSVD), and 873–912 (LYSPPSTLPRNSPTKRVDVPTTPGVPMTSLGRQRGYHKNS). Residue threonine 717 is modified to Phosphothreonine. A compositionally biased stretch (basic and acidic residues) spans 734–749 (SHSEKAHGHGASRKET). 3 positions are modified to phosphoserine: serine 875, serine 901, and serine 927. Positions 875–886 (SPPSTLPRNSPT) are enriched in polar residues. Residues 965–981 (LQPSLSRQSSYTSNGTL) show a composition bias toward polar residues. A disordered region spans residues 965–1017 (LQPSLSRQSSYTSNGTLPRTGLKRTPSLKPDVPPKPSFVPQTPSVRPLNKYTY).

This sequence belongs to the semaphorin family.

It localises to the cell membrane. Its function is as follows. Shows growth cone collapsing activity on dorsal root ganglion (DRG) neurons in vitro. May be a stop signal for the DRG neurons in their target areas, and possibly also for other neurons. May also be involved in the maintenance and remodeling of neuronal connections. Ligand of TREM2 with PLXNA1 as coreceptor in dendritic cells, plays a role in the generation of immune responses and skeletal homeostasis. This Pongo abelii (Sumatran orangutan) protein is Semaphorin-6D (SEMA6D).